The following is a 318-amino-acid chain: Probable cell division protein WhiA (318 aa).

The H-T-H motif DNA-binding region spans 276–310 (TLQELGEMVESGSISKSGINHRLRKIDQIADKIRN).

It belongs to the WhiA family.

In terms of biological role, involved in cell division and chromosome segregation. This Exiguobacterium sibiricum (strain DSM 17290 / CCUG 55495 / CIP 109462 / JCM 13490 / 255-15) protein is Probable cell division protein WhiA.